Here is a 206-residue protein sequence, read N- to C-terminus: Dephospho-CoA kinase (206 aa).

A DPCK domain is found at 4-200 (TVALTGGIGS…ASYLKLASQF (197 aa)). 12–17 (GSGKST) is a binding site for ATP.

This sequence belongs to the CoaE family.

The protein localises to the cytoplasm. The enzyme catalyses 3'-dephospho-CoA + ATP = ADP + CoA + H(+). Its pathway is cofactor biosynthesis; coenzyme A biosynthesis; CoA from (R)-pantothenate: step 5/5. Functionally, catalyzes the phosphorylation of the 3'-hydroxyl group of dephosphocoenzyme A to form coenzyme A. The chain is Dephospho-CoA kinase from Salmonella choleraesuis (strain SC-B67).